Here is a 632-residue protein sequence, read N- to C-terminus: Topoisomerase I damage affected protein 7 (632 aa).

Positions 1 to 18 are enriched in polar residues; the sequence is MNSNSTIGRTTLGESDTI. 5 disordered regions span residues 1-33, 87-109, 236-267, 295-322, and 335-359; these read MNSN…NSRS, TLVS…QYDP, SPST…SSTN, PTSS…DDTT, and QSTT…TSPI. N-linked (GlcNAc...) asparagine glycosylation is present at N4. Composition is skewed to low complexity over residues 19–33 and 87–108; these read SLSF…NSRS and TLVS…SQYD. N-linked (GlcNAc...) asparagine glycosylation is present at N253. A helical transmembrane segment spans residues 453 to 473; the sequence is IVGSVVGSVGGILICVLVVWF. N-linked (GlcNAc...) asparagine glycosylation occurs at N488. The segment covering 506–537 has biased composition (polar residues); that stretch reads QAKEASLQAQDSGSQQRNTETASANNPFSNEF. Residues 506-551 form a disordered region; that stretch reads QAKEASLQAQDSGSQQRNTETASANNPFSNEFNFKARGNPPPVPPP. K508 participates in a covalent cross-link: Glycyl lysine isopeptide (Lys-Gly) (interchain with G-Cter in ubiquitin). 3 N-linked (GlcNAc...) asparagine glycosylation sites follow: N553, N558, and N622. At S624 the chain carries Phosphoserine.

It belongs to the TDA7 family.

The protein resides in the vacuole membrane. In Saccharomyces cerevisiae (strain Lalvin EC1118 / Prise de mousse) (Baker's yeast), this protein is Topoisomerase I damage affected protein 7 (TDA7).